We begin with the raw amino-acid sequence, 454 residues long: Chaperone SurA (454 aa).

A signal peptide spans 1-28 (MKISSFRKGRWLGALALFAVVCWSMADA). 2 PpiC domains span residues 177–278 (DREY…KMLA) and 287–386 (LTKT…QVLE). The tract at residues 431-454 (LDETPASPGEDAPAGEDSPETFMR) is disordered. Residues 443 to 454 (PAGEDSPETFMR) are compositionally biased toward acidic residues.

The protein resides in the periplasm. The catalysed reaction is [protein]-peptidylproline (omega=180) = [protein]-peptidylproline (omega=0). Its function is as follows. Chaperone involved in the correct folding and assembly of outer membrane proteins. Recognizes specific patterns of aromatic residues and the orientation of their side chains, which are found more frequently in integral outer membrane proteins. May act in both early periplasmic and late outer membrane-associated steps of protein maturation. In Methylococcus capsulatus (strain ATCC 33009 / NCIMB 11132 / Bath), this protein is Chaperone SurA.